A 154-amino-acid polypeptide reads, in one-letter code: Aspartate carbamoyltransferase regulatory chain (154 aa).

Zn(2+) is bound by residues Cys109, Cys114, Cys138, and Cys141.

It belongs to the PyrI family. In terms of assembly, contains catalytic and regulatory chains. It depends on Zn(2+) as a cofactor.

Its function is as follows. Involved in allosteric regulation of aspartate carbamoyltransferase. This is Aspartate carbamoyltransferase regulatory chain from Aeromonas hydrophila subsp. hydrophila (strain ATCC 7966 / DSM 30187 / BCRC 13018 / CCUG 14551 / JCM 1027 / KCTC 2358 / NCIMB 9240 / NCTC 8049).